The primary structure comprises 108 residues: ATP synthase peripheral stalk subunit F6, mitochondrial (108 aa).

Residues 1–32 constitute a mitochondrion transit peptide; the sequence is MILQRLFRFSSIIRSAVSVHFRRNIGVTAVAF. N6-acetyllysine is present on residues Lys-41, Lys-46, and Lys-79. N6-acetyllysine; alternate occurs at positions 84, 94, and 99. N6-succinyllysine; alternate is present on residues Lys-84, Lys-94, and Lys-99. Lys-105 carries the N6-acetyllysine modification.

This sequence belongs to the eukaryotic ATPase subunit F6 family. Component of the ATP synthase complex composed at least of ATP5F1A/subunit alpha, ATP5F1B/subunit beta, ATP5MC1/subunit c (homooctomer), MT-ATP6/subunit a, MT-ATP8/subunit 8, ATP5ME/subunit e, ATP5MF/subunit f, ATP5MG/subunit g, ATP5MK/subunit k, ATP5MJ/subunit j, ATP5F1C/subunit gamma, ATP5F1D/subunit delta, ATP5F1E/subunit epsilon, ATP5PF/subunit F6, ATP5PB/subunit b, ATP5PD/subunit d, ATP5PO/subunit OSCP. ATP synthase complex consists of a soluble F(1) head domain (subunits alpha(3) and beta(3)) - the catalytic core - and a membrane F(0) domain - the membrane proton channel (subunits c, a, 8, e, f, g, k and j). These two domains are linked by a central stalk (subunits gamma, delta, and epsilon) rotating inside the F1 region and a stationary peripheral stalk (subunits F6, b, d, and OSCP).

The protein resides in the mitochondrion. The protein localises to the mitochondrion inner membrane. In terms of biological role, subunit F6, of the mitochondrial membrane ATP synthase complex (F(1)F(0) ATP synthase or Complex V) that produces ATP from ADP in the presence of a proton gradient across the membrane which is generated by electron transport complexes of the respiratory chain. ATP synthase complex consist of a soluble F(1) head domain - the catalytic core - and a membrane F(1) domain - the membrane proton channel. These two domains are linked by a central stalk rotating inside the F(1) region and a stationary peripheral stalk. During catalysis, ATP synthesis in the catalytic domain of F(1) is coupled via a rotary mechanism of the central stalk subunits to proton translocation. In vivo, can only synthesize ATP although its ATP hydrolase activity can be activated artificially in vitro. Part of the complex F(0) domain. Part of the complex F(0) domain and the peripheric stalk, which acts as a stator to hold the catalytic alpha(3)beta(3) subcomplex and subunit a/ATP6 static relative to the rotary elements. The sequence is that of ATP synthase peripheral stalk subunit F6, mitochondrial from Macaca fascicularis (Crab-eating macaque).